Reading from the N-terminus, the 671-residue chain is tRNA(Met) cytidine acetyltransferase TmcA (671 aa).

ATP-binding positions include Gln-180, 202–211 (GRGKSALAGQ), and Arg-319. Residues 356–531 (QTLWQSDPET…SGCYTAMALL (176 aa)) form the N-acetyltransferase domain. Acetyl-CoA is bound by residues 461-463 (IAV), 468-474 (QREGTGR), Glu-499, and Arg-506.

Belongs to the RNA cytidine acetyltransferase family. TmcA subfamily.

Its subcellular location is the cytoplasm. The enzyme catalyses cytidine(34) in elongator tRNA(Met) + acetyl-CoA + ATP + H2O = N(4)-acetylcytidine(34) in elongator tRNA(Met) + ADP + phosphate + CoA + H(+). The catalysed reaction is 2-hydroxyisobutanoyl-CoA + L-lysyl-[protein] = N(6)-(2-hydroxyisobutanoyl)-L-lysyl-[protein] + CoA + H(+). ATP/GTP hydrolysis is stimulated by the addition of acetyl-CoA and tRNA(Met). Binding of acetyl-CoA to TmcA activates both ATPase and tRNA-binding activities. ATP promotes the 2-hydroxyisobutyryltransferase activity. Its function is as follows. Catalyzes the formation of N(4)-acetylcytidine (ac(4)C) at the wobble position of tRNA(Met), by using acetyl-CoA as an acetyl donor and ATP (or GTP). It recognizes the wobble base of tRNA(Met), thus distinguishing between tRNA(Met) and the structurally similar tRNA(Ile2). Could use an RNA helicase motor driven by ATP hydrolysis to deliver the wobble base of tRNA(Met) to the acetyltransferase domain of TmcA. In terms of biological role, also functions as a lysine 2-hydroxyisobutyryltransferase to regulate transcription. Can specifically catalyze the 2-hydroxyisobutyrylation (Khib) of the DNA-binding protein H-NS. Hydroxyisobutyrylation of H-NS decreases its DNA-binding activity, promotes the expression of acid-resistance genes and enhances bacterial survival under extreme acid stress. This chain is tRNA(Met) cytidine acetyltransferase TmcA, found in Escherichia coli (strain K12).